Here is a 258-residue protein sequence, read N- to C-terminus: Dehydrodolichyl diphosphate synthase complex subunit nus1 (258 aa).

The helical transmembrane segment at 5–21 threads the bilayer; it reads IFFYLALWVIQSVYGAW.

It belongs to the UPP synthase family. In terms of assembly, forms an active dehydrodolichyl diphosphate synthase complex with SPAC4D7.04c. Requires Mg(2+) as cofactor.

It localises to the endoplasmic reticulum membrane. The enzyme catalyses n isopentenyl diphosphate + (2E,6E)-farnesyl diphosphate = a di-trans,poly-cis-polyprenyl diphosphate + n diphosphate. The protein operates within protein modification; protein glycosylation. In terms of biological role, with SPAC4D7.04c, forms the dehydrodolichyl diphosphate synthase (DDS) complex, an essential component of the dolichol monophosphate (Dol-P) biosynthetic machinery. Adds multiple copies of isopentenyl pyrophosphate (IPP) to farnesyl pyrophosphate (FPP) to produce dehydrodolichyl diphosphate (Dedol-PP), a precursor of dolichol which is utilized as a sugar carrier in protein glycosylation in the endoplasmic reticulum (ER). The protein is Dehydrodolichyl diphosphate synthase complex subunit nus1 (nus1) of Schizosaccharomyces pombe (strain 972 / ATCC 24843) (Fission yeast).